The sequence spans 456 residues: Argininosuccinate lyase (456 aa).

This sequence belongs to the lyase 1 family. Argininosuccinate lyase subfamily.

It localises to the cytoplasm. The catalysed reaction is 2-(N(omega)-L-arginino)succinate = fumarate + L-arginine. It participates in amino-acid biosynthesis; L-arginine biosynthesis; L-arginine from L-ornithine and carbamoyl phosphate: step 3/3. This is Argininosuccinate lyase from Listeria monocytogenes serovar 1/2a (strain ATCC BAA-679 / EGD-e).